The chain runs to 539 residues: MPKLLRFDEEARRSLEKGVNKVADAVRITLGPKGRNVVIEKSWGSPTITNDGVSIAKEIELEDKFENLGAQLVKEVASKTNDVAGDGTTTATVLAQSMIREGLKNVAAGSNPILLKRGIDKATEKAAKYIKDKAKKLSGREDIAHVAAISANSSEIGDLIAEAMDKVGEDGVITVEDSKTLETYVEFTEGMQFDRGYISPYFVTDAEKMEVELKEPFILITDKKLSAVKPLIPVLEKVAQTGKPILVIAEDVEGEALTTLVLNKLKGTLSACAVKAPGFGDRRKAMLQDIAILTGGTVISDELGINLEDVAIEDLGRADIVRVKKDDTIIIGGKGNPEEIKKRIAQIKSQIEQTTSEYEKETLQERMAKLAGGVAVIKVGAATETELKEKKHRIEDALSATRAAVEEGIVPGGGVTLIRSRKAVEDVLKELDGDEKVGAMIVYKALEAPIRQIAENAGYDGAVIIEKILASKEESYGFDALKGEYTDMFKAGIIDPAKVTRSALQNAASIAGMLLTTEVLVVEKPEEKKEAAPAMPPEY.

ATP contacts are provided by residues threonine 29–proline 32, aspartate 86–threonine 90, glycine 413, aspartate 479–leucine 481, and aspartate 495.

Belongs to the chaperonin (HSP60) family. As to quaternary structure, forms a cylinder of 14 subunits composed of two heptameric rings stacked back-to-back. Interacts with the co-chaperonin GroES.

The protein localises to the cytoplasm. The catalysed reaction is ATP + H2O + a folded polypeptide = ADP + phosphate + an unfolded polypeptide.. Functionally, together with its co-chaperonin GroES, plays an essential role in assisting protein folding. The GroEL-GroES system forms a nano-cage that allows encapsulation of the non-native substrate proteins and provides a physical environment optimized to promote and accelerate protein folding. This Pseudothermotoga lettingae (strain ATCC BAA-301 / DSM 14385 / NBRC 107922 / TMO) (Thermotoga lettingae) protein is Chaperonin GroEL.